Here is a 215-residue protein sequence, read N- to C-terminus: Probable phosphoglycerate mutase GpmB (215 aa).

Substrate-binding positions include 8-15 (RHGETQWN), 21-22 (QG), Arg-58, Arg-60, 82-85 (ELNM), 104-105 (RR), and 151-152 (GI). The Tele-phosphohistidine intermediate role is filled by His-9. Glu-82 serves as the catalytic Proton donor/acceptor.

This sequence belongs to the phosphoglycerate mutase family. GpmB subfamily.

The enzyme catalyses (2R)-2-phosphoglycerate = (2R)-3-phosphoglycerate. It participates in carbohydrate degradation; glycolysis; pyruvate from D-glyceraldehyde 3-phosphate: step 3/5. The polypeptide is Probable phosphoglycerate mutase GpmB (Escherichia coli O1:K1 / APEC).